A 67-amino-acid chain; its full sequence is Large ribosomal subunit protein bL35 (67 aa).

This sequence belongs to the bacterial ribosomal protein bL35 family.

The sequence is that of Large ribosomal subunit protein bL35 from Agrobacterium fabrum (strain C58 / ATCC 33970) (Agrobacterium tumefaciens (strain C58)).